Reading from the N-terminus, the 216-residue chain is 3-isopropylmalate dehydratase small subunit (216 aa).

Belongs to the LeuD family. LeuD type 1 subfamily. As to quaternary structure, heterodimer of LeuC and LeuD.

The catalysed reaction is (2R,3S)-3-isopropylmalate = (2S)-2-isopropylmalate. The protein operates within amino-acid biosynthesis; L-leucine biosynthesis; L-leucine from 3-methyl-2-oxobutanoate: step 2/4. In terms of biological role, catalyzes the isomerization between 2-isopropylmalate and 3-isopropylmalate, via the formation of 2-isopropylmaleate. The chain is 3-isopropylmalate dehydratase small subunit from Polaromonas naphthalenivorans (strain CJ2).